We begin with the raw amino-acid sequence, 304 residues long: UDP-N-acetylenolpyruvoylglucosamine reductase (304 aa).

The 165-residue stretch at 34–198 (IGGKADFLVW…LEVVFALQPG (165 aa)) folds into the FAD-binding PCMH-type domain. The active site involves Arg177. The Proton donor role is filled by Ser227. Glu297 is a catalytic residue.

The protein belongs to the MurB family. FAD serves as cofactor.

It localises to the cytoplasm. The catalysed reaction is UDP-N-acetyl-alpha-D-muramate + NADP(+) = UDP-N-acetyl-3-O-(1-carboxyvinyl)-alpha-D-glucosamine + NADPH + H(+). The protein operates within cell wall biogenesis; peptidoglycan biosynthesis. In terms of biological role, cell wall formation. In Geobacillus thermodenitrificans (strain NG80-2), this protein is UDP-N-acetylenolpyruvoylglucosamine reductase.